Here is a 404-residue protein sequence, read N- to C-terminus: Proteasomal ubiquitin receptor ADRM1-B (404 aa).

The 114-residue stretch at 17 to 130 (SSSKYLVEFR…RKVNEYLNNP (114 aa)) folds into the Pru domain. 3 disordered regions span residues 128–149 (NNPP…LSAL), 195–258 (GSGG…TSPT), and 376–404 (FAKA…MSLD). The segment covering 195-247 (GSGGPTTSSSSSSSRSQSAAVTPSSTTSSTRTTSAPVAPAAAPATTPSPAVSS) has biased composition (low complexity). Over residues 248–258 (NDGASAATSPT) the composition is skewed to polar residues. Residues 278 to 390 (TGEGGQQVDL…QSTSSQKERE (113 aa)) form the DEUBAD domain. The segment covering 386–395 (QKERESSEKK) has biased composition (basic and acidic residues).

This sequence belongs to the ADRM1 family. In terms of assembly, component of the 19S proteasome regulatory particle complex. The 26S proteasome consists of a 20S core particle (CP) and two 19S regulatory subunits (RP).

The protein resides in the cytoplasm. The protein localises to the nucleus. In terms of biological role, component of the 26S proteasome, a multiprotein complex involved in the ATP-dependent degradation of ubiquitinated proteins. This complex plays a key role in the maintenance of protein homeostasis by removing misfolded or damaged proteins, which could impair cellular functions, and by removing proteins whose functions are no longer required. Therefore, the proteasome participates in numerous cellular processes, including cell cycle progression, apoptosis, or DNA damage repair. Within the complex, functions as a proteasomal ubiquitin receptor. This Xenopus laevis (African clawed frog) protein is Proteasomal ubiquitin receptor ADRM1-B (adrm1-b).